A 146-amino-acid chain; its full sequence is 3-dehydroquinate dehydratase (146 aa).

The active-site Proton acceptor is the Tyr22. Asn73, His79, and Asp86 together coordinate substrate. The active-site Proton donor is His99. Substrate-binding positions include 100-101 (LS) and Arg110.

The protein belongs to the type-II 3-dehydroquinase family. In terms of assembly, homododecamer.

It carries out the reaction 3-dehydroquinate = 3-dehydroshikimate + H2O. It functions in the pathway metabolic intermediate biosynthesis; chorismate biosynthesis; chorismate from D-erythrose 4-phosphate and phosphoenolpyruvate: step 3/7. In terms of biological role, catalyzes a trans-dehydration via an enolate intermediate. The polypeptide is 3-dehydroquinate dehydratase (Parasynechococcus marenigrum (strain WH8102)).